The following is a 341-amino-acid chain: MVKYTVENKIIAGLPKGKLKGANFVIAHETANSKSTIDNEVSYMTRNWKNAFVTHFVGGGGRVVQVANVNYVSWGAGQYANSYSYAQVELCRTSNATTFKKDYEVYCQLLVDLAKKAGIPITLDSGSKTSDKGIKSHKWVADKLGGTTHQDPYAYLSSWGISKAQFASDLAKVSGGGNTGTAPAKPSTPAPKPSTPSTNLDKLGLVDYMNAKKMDSSYSNRDKLAKQYGIANYSGTASQNTTLLSKIKGGAPKPSTPAPKPSTSTAKKIYFPPNKGNWSVYPTNKAPVKANAIGAINPTKFGGLTYTIQKDRGNGVYEIQTDQFGRVQVYGAPSTGAVIKK.

Residues 23–153 form the N-acetylmuramoyl-L-alanine amidase domain; it reads NFVIAHETAN…LGGTTHQDPY (131 aa). 2 disordered regions span residues 175-201 and 248-267; these read GGGN…TNLD and KGGA…STAK.

It belongs to the N-acetylmuramoyl-L-alanine amidase 2 family.

It is found in the secreted. The catalysed reaction is Hydrolyzes the link between N-acetylmuramoyl residues and L-amino acid residues in certain cell-wall glycopeptides.. This is Endolysin (PLY511) from Listeria phage A511 (Bacteriophage A511).